A 582-amino-acid chain; its full sequence is Aspartate--tRNA ligase (582 aa).

Glutamate 174 provides a ligand contact to L-aspartate. Residues 198 to 201 form an aspartate region; it reads QITK. An L-aspartate-binding site is contributed by arginine 220. Residues 220–222 and glutamine 229 contribute to the ATP site; that span reads RDE. Residue histidine 443 coordinates L-aspartate. Glutamate 477 lines the ATP pocket. Arginine 484 is a binding site for L-aspartate. 529-532 is a binding site for ATP; the sequence is GLDR.

This sequence belongs to the class-II aminoacyl-tRNA synthetase family. Type 1 subfamily. In terms of assembly, homodimer.

It is found in the cytoplasm. The catalysed reaction is tRNA(Asp) + L-aspartate + ATP = L-aspartyl-tRNA(Asp) + AMP + diphosphate. In terms of biological role, catalyzes the attachment of L-aspartate to tRNA(Asp) in a two-step reaction: L-aspartate is first activated by ATP to form Asp-AMP and then transferred to the acceptor end of tRNA(Asp). This is Aspartate--tRNA ligase from Streptococcus pyogenes serotype M6 (strain ATCC BAA-946 / MGAS10394).